A 217-amino-acid chain; its full sequence is Large ribosomal subunit protein bL25 (217 aa).

Positions 178 to 217 (VVAPTEEPTEEEIEAMEGEQQTEEPEVVGESKEDEEKTEE) are disordered. The span at 184–205 (EPTEEEIEAMEGEQQTEEPEVV) shows a compositional bias: acidic residues. Basic and acidic residues predominate over residues 206 to 217 (GESKEDEEKTEE).

Belongs to the bacterial ribosomal protein bL25 family. CTC subfamily. Part of the 50S ribosomal subunit; part of the 5S rRNA/L5/L18/L25 subcomplex. Contacts the 5S rRNA. Binds to the 5S rRNA independently of L5 and L18.

This is one of the proteins that binds to the 5S RNA in the ribosome where it forms part of the central protuberance. In Staphylococcus aureus (strain MRSA252), this protein is Large ribosomal subunit protein bL25.